We begin with the raw amino-acid sequence, 377 residues long: Chorismate synthase (377 aa).

Position 47 (R47) interacts with NADP(+). Residues 124 to 126 (RSS), 252 to 253 (NS), G296, 311 to 315 (KPTPS), and R338 contribute to the FMN site.

It belongs to the chorismate synthase family. The cofactor is FMNH2.

The enzyme catalyses 5-O-(1-carboxyvinyl)-3-phosphoshikimate = chorismate + phosphate. It functions in the pathway metabolic intermediate biosynthesis; chorismate biosynthesis; chorismate from D-erythrose 4-phosphate and phosphoenolpyruvate: step 7/7. Functionally, catalyzes the anti-1,4-elimination of the C-3 phosphate and the C-6 proR hydrogen from 5-enolpyruvylshikimate-3-phosphate (EPSP) to yield chorismate, which is the branch point compound that serves as the starting substrate for the three terminal pathways of aromatic amino acid biosynthesis. This reaction introduces a second double bond into the aromatic ring system. This chain is Chorismate synthase, found in Methanococcus vannielii (strain ATCC 35089 / DSM 1224 / JCM 13029 / OCM 148 / SB).